A 190-amino-acid chain; its full sequence is Elongation factor P-like protein (190 aa).

Belongs to the elongation factor P family.

The chain is Elongation factor P-like protein from Yersinia pestis bv. Antiqua (strain Antiqua).